The chain runs to 1039 residues: L-arabinokinase (1039 aa).

A helical transmembrane segment spans residues 662 to 678; it reads AAYVAGTILVLMIELGV. An ATP-binding site is contributed by 693 to 703; it reads PEGKGVSSSAA. Asp-745 functions as the Proton acceptor in the catalytic mechanism.

Belongs to the GHMP kinase family.

The protein localises to the membrane. It carries out the reaction L-arabinose + ATP = beta-L-arabinose 1-phosphate + ADP + H(+). Its function is as follows. Arabinose kinase. Involved in the salvage pathway which converts free L-arabinose to UDP-L-arabinose. May play a role in arabinose transport. In Arabidopsis thaliana (Mouse-ear cress), this protein is L-arabinokinase (ARA1).